The sequence spans 798 residues: MKFNENWLREWINPKITSVSLRNQIVESGIEIESIHEFNPIFDGFLVGKIVECINPCKGNNLKILKVDVGYKKLLNIVCGASNCRNNIKVVVATIDSILPNGSKIKIKKIKEKLSEGMICSFFELGLFNFCKDIIELPEDIPIGKKINDLFLLKKDTFIKVAVTPNRPDGLSILGIARNIAAINNLKKIRLKKRILPTTIEDQFPITINTEKQSVNYFGRIIQNVNLNVDTPFWMKKKLFFCDLLSDNIIENILNYILIEIGQPLNILNADKIDDVIEIRMAIKKEFLILKNDTRIVLDKDILVFSDKTKILFIPGNINNSDLEPNKNTKNIFLTSYLVDKKSILNILKKIDSNNILDYYSHGVDASLQKYAIEYATYLIVKICGGKIGPINTKKSNFNSLSCSNKIKLYHQNFNKCIDSFVDSSIISNILLCLEYKVNFHKKYWYVFPPSWRFDILIEEDVIGDILRIYNYNNIPLTPLKQNYYFNSKNKDLKSPLLDEAAVLLINRGYYEIITYSFINPSLQDDIIPNNNQILISNPISKDFSSMRLSLWPGLLKTVSYNKNRQQESMRFFERGLCFSIDESQILGIRQEMFLGGVISGFYSKENWFSVRRKVDFYDLKGDLESLLEVICGLNKFEIRHQNILGLHPEQSAKIYLDNKYIGSLGKIHPKIEKKLNLYNSTFLFELSLNYISKLKFYNTEEISKYPTSRRDIAILVSKDIPFLDIITVCKDFFVNKKVEINLFDVYSCKEFDNRKKSLGISFVFQNFKKNLKENEVNLMLHDCIKILKKKFQVVLRK.

A tRNA-binding domain is found at 39–148; sequence NPIFDGFLVG…EDIPIGKKIN (110 aa). Residues 402–477 enclose the B5 domain; the sequence is SCSNKIKLYH…RIYNYNNIPL (76 aa). Residues aspartate 455, aspartate 461, and aspartate 465 each coordinate Mg(2+). The FDX-ACB domain occupies 704–797; it reads SKYPTSRRDI…LKKKFQVVLR (94 aa).

The protein belongs to the phenylalanyl-tRNA synthetase beta subunit family. Type 1 subfamily. In terms of assembly, tetramer of two alpha and two beta subunits. The cofactor is Mg(2+).

It localises to the cytoplasm. It catalyses the reaction tRNA(Phe) + L-phenylalanine + ATP = L-phenylalanyl-tRNA(Phe) + AMP + diphosphate + H(+). The chain is Phenylalanine--tRNA ligase beta subunit (pheT) from Buchnera aphidicola subsp. Schizaphis graminum (strain Sg).